Consider the following 123-residue polypeptide: NADH-quinone oxidoreductase subunit A (123 aa).

A run of 3 helical transmembrane segments spans residues 11–31, 67–87, and 92–112; these read FPVL…VSIG, LVAI…PWGV, and IGWP…LGFA.

The protein belongs to the complex I subunit 3 family. NDH-1 is composed of 14 different subunits. Subunits NuoA, H, J, K, L, M, N constitute the membrane sector of the complex.

It localises to the cell inner membrane. It catalyses the reaction a quinone + NADH + 5 H(+)(in) = a quinol + NAD(+) + 4 H(+)(out). Functionally, NDH-1 shuttles electrons from NADH, via FMN and iron-sulfur (Fe-S) centers, to quinones in the respiratory chain. The immediate electron acceptor for the enzyme in this species is believed to be ubiquinone. Couples the redox reaction to proton translocation (for every two electrons transferred, four hydrogen ions are translocated across the cytoplasmic membrane), and thus conserves the redox energy in a proton gradient. The protein is NADH-quinone oxidoreductase subunit A of Paraburkholderia phymatum (strain DSM 17167 / CIP 108236 / LMG 21445 / STM815) (Burkholderia phymatum).